The sequence spans 230 residues: Ureidoacrylate amidohydrolase RutB (230 aa).

The Proton acceptor role is filled by Asp-24. Residue Lys-133 is part of the active site. The active-site Nucleophile is the Cys-166.

It belongs to the isochorismatase family. RutB subfamily.

It carries out the reaction (Z)-3-ureidoacrylate + H2O + H(+) = (Z)-3-aminoacrylate + NH4(+) + CO2. It catalyses the reaction (Z)-3-ureidoacrylate + H2O = (Z)-3-aminoacrylate + carbamate + H(+). The catalysed reaction is (Z)-2-methylureidoacrylate + H2O + H(+) = (Z)-2-methylaminoacrylate + NH4(+) + CO2. Hydrolyzes ureidoacrylate to form aminoacrylate and carbamate. The carbamate hydrolyzes spontaneously, thereby releasing one of the nitrogen atoms of the pyrimidine ring as ammonia and one of its carbon atoms as CO2. This chain is Ureidoacrylate amidohydrolase RutB, found in Escherichia coli (strain B / BL21-DE3).